The chain runs to 245 residues: tRNA pseudouridine synthase A (245 aa).

Residue aspartate 52 is the Nucleophile of the active site. Substrate is bound at residue tyrosine 111.

It belongs to the tRNA pseudouridine synthase TruA family. In terms of assembly, homodimer.

The catalysed reaction is uridine(38/39/40) in tRNA = pseudouridine(38/39/40) in tRNA. Formation of pseudouridine at positions 38, 39 and 40 in the anticodon stem and loop of transfer RNAs. The polypeptide is tRNA pseudouridine synthase A (Nitrobacter hamburgensis (strain DSM 10229 / NCIMB 13809 / X14)).